The chain runs to 74 residues: Protein krueppel (74 aa).

4 consecutive C2H2-type zinc fingers follow at residues 1–4, 10–32, 38–60, and 66–74; these read ERTH, FKCP…MRLH, YHCS…LRVH, and YTCEICKAK.

The protein belongs to the krueppel C2H2-type zinc-finger protein family.

It is found in the nucleus. Its function is as follows. Krueppel is a gap class segmentation protein. This is Protein krueppel (Kr) from Bradysia coprophila (Dark-winged fungus gnat).